We begin with the raw amino-acid sequence, 447 residues long: NADH-quinone oxidoreductase subunit F (447 aa).

G61–G70 provides a ligand contact to NAD(+). G174–T221 contributes to the FMN binding site. The [4Fe-4S] cluster site is built by C352, C355, C358, and C399.

Belongs to the complex I 51 kDa subunit family. Composed of 13 different subunits. Subunits NuoCD, E, F, and G constitute the peripheral sector of the complex. It depends on [4Fe-4S] cluster as a cofactor. FMN serves as cofactor.

The catalysed reaction is a quinone + NADH + 5 H(+)(in) = a quinol + NAD(+) + 4 H(+)(out). In terms of biological role, NDH-1 shuttles electrons from NADH, via FMN and iron-sulfur (Fe-S) centers, to quinones in the respiratory chain. Couples the redox reaction to proton translocation (for every two electrons transferred, four hydrogen ions are translocated across the cytoplasmic membrane), and thus conserves the redox energy in a proton gradient. The protein is NADH-quinone oxidoreductase subunit F (nuoF) of Buchnera aphidicola subsp. Schizaphis graminum (strain Sg).